We begin with the raw amino-acid sequence, 263 residues long: Glucosamine-6-phosphate deaminase (263 aa).

The active-site Proton acceptor; for enolization step is D72. Residue D141 is the For ring-opening step of the active site. Catalysis depends on H143, which acts as the Proton acceptor; for ring-opening step. The For ring-opening step role is filled by E148.

This sequence belongs to the glucosamine/galactosamine-6-phosphate isomerase family. NagB subfamily.

It catalyses the reaction alpha-D-glucosamine 6-phosphate + H2O = beta-D-fructose 6-phosphate + NH4(+). The protein operates within amino-sugar metabolism; N-acetylneuraminate degradation; D-fructose 6-phosphate from N-acetylneuraminate: step 5/5. Allosterically activated by N-acetylglucosamine 6-phosphate (GlcNAc6P). Catalyzes the reversible isomerization-deamination of glucosamine 6-phosphate (GlcN6P) to form fructose 6-phosphate (Fru6P) and ammonium ion. The protein is Glucosamine-6-phosphate deaminase of Porphyromonas gingivalis (strain ATCC 33277 / DSM 20709 / CIP 103683 / JCM 12257 / NCTC 11834 / 2561).